A 305-amino-acid polypeptide reads, in one-letter code: Protein EXORDIUM-like 2 (305 aa).

The signal sequence occupies residues 1–23; the sequence is MASNYRFAIFLTLFFATAGFSAA. A glycan (N-linked (GlcNAc...) asparagine) is linked at N44.

Belongs to the EXORDIUM family.

The protein localises to the secreted. It localises to the extracellular space. Its subcellular location is the apoplast. Its function is as follows. May play a role in a brassinosteroid-dependent regulation of growth and development. This chain is Protein EXORDIUM-like 2 (EXL2), found in Arabidopsis thaliana (Mouse-ear cress).